Consider the following 191-residue polypeptide: Potassium-transporting ATPase KdpC subunit (191 aa).

Residues alanine 7–valine 27 traverse the membrane as a helical segment.

It belongs to the KdpC family. The system is composed of three essential subunits: KdpA, KdpB and KdpC.

Its subcellular location is the cell inner membrane. Its function is as follows. Part of the high-affinity ATP-driven potassium transport (or Kdp) system, which catalyzes the hydrolysis of ATP coupled with the electrogenic transport of potassium into the cytoplasm. This subunit acts as a catalytic chaperone that increases the ATP-binding affinity of the ATP-hydrolyzing subunit KdpB by the formation of a transient KdpB/KdpC/ATP ternary complex. In Methylibium petroleiphilum (strain ATCC BAA-1232 / LMG 22953 / PM1), this protein is Potassium-transporting ATPase KdpC subunit.